The chain runs to 431 residues: Beta-lactamase hydrolase-like protein (431 aa).

3 residues coordinate Zn(2+): His-212, His-214, and His-286. Asp-309 is a binding site for substrate.

It belongs to the metallo-beta-lactamase superfamily. Zn(2+) is required as a cofactor.

Functionally, could play a role in cell adherence or biofilm development. The polypeptide is Beta-lactamase hydrolase-like protein (Agrobacterium fabrum (strain C58 / ATCC 33970) (Agrobacterium tumefaciens (strain C58))).